A 97-amino-acid chain; its full sequence is Small nuclear ribonucleoprotein Sm D3 (97 aa).

Residues 3–75 (LCIKLLHETQ…IRFLIVPDML (73 aa)) form the Sm domain.

Belongs to the snRNP core protein family. As to quaternary structure, belongs to the 40S cdc5-associated complex (or cwf complex), a spliceosome sub-complex reminiscent of a late-stage spliceosome composed of the U2, U5 and U6 snRNAs and at least brr2, cdc5, cwf2/prp3, cwf3/syf1, cwf4/syf3, cwf5/ecm2, spp42/cwf6, cwf7/spf27, cwf8, cwf9, cwf10, cwf11, cwf12, prp45/cwf13, cwf14, cwf15, cwf16, cwf17, cwf18, cwf19, cwf20, cwf21, cwf22, cwf23, cwf24, cwf25, cwf26, cyp7/cwf27, cwf28, cwf29/ist3, lea1, msl1, prp5/cwf1, prp10, prp12/sap130, prp17, prp22, sap61, sap62, sap114, sap145, slu7, smb1, smd1, smd3, smf1, smg1 and syf2. Interacts with saf5; the interaction is direct.

It localises to the nucleus. The protein resides in the cytoplasm. It is found in the cytosol. Its function is as follows. Plays a role in pre-mRNA splicing as a core component of the spliceosomal U1, U2, U4 and U5 small nuclear ribonucleoproteins (snRNPs), the building blocks of the spliceosome. The sequence is that of Small nuclear ribonucleoprotein Sm D3 (smd3) from Schizosaccharomyces pombe (strain 972 / ATCC 24843) (Fission yeast).